The primary structure comprises 271 residues: Fork head domain-containing protein FD5 (271 aa).

Residues 12–103 constitute a DNA-binding region (fork-head); it reads QKPPYSYISL…FDMFENGSLL (92 aa).

In terms of tissue distribution, expressed in early embryogenesis in 14 symmetrical pairs of segmentally arranged neuroblasts and in developing peripheral nervous system. Also, later in embryogenesis, in a cluster of cells in head region.

The protein localises to the nucleus. Functionally, involved in development during embryogenesis. The sequence is that of Fork head domain-containing protein FD5 (fd96Cb) from Drosophila melanogaster (Fruit fly).